The following is a 485-amino-acid chain: Glutamate--tRNA ligase (485 aa).

A 'HIGH' region motif is present at residues 11-21; that stretch reads PSPTGHLHIGN. The short motif at 252–256 is the 'KMSKS' region element; the sequence is KLSKR. Lysine 255 is a binding site for ATP.

This sequence belongs to the class-I aminoacyl-tRNA synthetase family. Glutamate--tRNA ligase type 1 subfamily. Monomer.

The protein localises to the cytoplasm. The catalysed reaction is tRNA(Glu) + L-glutamate + ATP = L-glutamyl-tRNA(Glu) + AMP + diphosphate. Its function is as follows. Catalyzes the attachment of glutamate to tRNA(Glu) in a two-step reaction: glutamate is first activated by ATP to form Glu-AMP and then transferred to the acceptor end of tRNA(Glu). The chain is Glutamate--tRNA ligase from Bacillus cereus (strain ATCC 10987 / NRS 248).